Here is a 526-residue protein sequence, read N- to C-terminus: Bifunctional purine biosynthesis protein PurH (526 aa).

Residues 1–148 enclose the MGS-like domain; that stretch reads MSLNNIIKNA…KNYKDVIVIV (148 aa).

Belongs to the PurH family.

The enzyme catalyses (6R)-10-formyltetrahydrofolate + 5-amino-1-(5-phospho-beta-D-ribosyl)imidazole-4-carboxamide = 5-formamido-1-(5-phospho-D-ribosyl)imidazole-4-carboxamide + (6S)-5,6,7,8-tetrahydrofolate. The catalysed reaction is IMP + H2O = 5-formamido-1-(5-phospho-D-ribosyl)imidazole-4-carboxamide. It functions in the pathway purine metabolism; IMP biosynthesis via de novo pathway; 5-formamido-1-(5-phospho-D-ribosyl)imidazole-4-carboxamide from 5-amino-1-(5-phospho-D-ribosyl)imidazole-4-carboxamide (10-formyl THF route): step 1/1. The protein operates within purine metabolism; IMP biosynthesis via de novo pathway; IMP from 5-formamido-1-(5-phospho-D-ribosyl)imidazole-4-carboxamide: step 1/1. In Buchnera aphidicola subsp. Schizaphis graminum (strain Sg), this protein is Bifunctional purine biosynthesis protein PurH.